The primary structure comprises 171 residues: MNSIPEGRPTPNLPRTANKRGVARLAAVQALFQMDVAGTGVMEVVAEYEAFRLGKEVDGTQYLDADPQWFRAIVAGVVEDQLKLDPMIHQALTEDWPLSRLDSTLRAILRAGAWELKARKDVPTAVIVSEYVDIAKAFYTEDEPKLVNAVLDRLALVIRGESRGAKPRHKS.

It belongs to the NusB family.

Involved in transcription antitermination. Required for transcription of ribosomal RNA (rRNA) genes. Binds specifically to the boxA antiterminator sequence of the ribosomal RNA (rrn) operons. The sequence is that of Transcription antitermination protein NusB from Brucella abortus (strain S19).